Reading from the N-terminus, the 607-residue chain is Chaperone protein DnaK (607 aa).

Residue Thr-174 is modified to Phosphothreonine; by autocatalysis. The segment covering 577-594 has biased composition (polar residues); that stretch reads QSAGSTAGNPGQGQSTEN. The segment at 577–607 is disordered; sequence QSAGSTAGNPGQGQSTENPGGKTIDGDYKVN.

The protein belongs to the heat shock protein 70 family.

Its function is as follows. Acts as a chaperone. This chain is Chaperone protein DnaK, found in Dictyoglomus turgidum (strain DSM 6724 / Z-1310).